The primary structure comprises 118 residues: Large ribosomal subunit protein bL20 (118 aa).

This sequence belongs to the bacterial ribosomal protein bL20 family.

Its function is as follows. Binds directly to 23S ribosomal RNA and is necessary for the in vitro assembly process of the 50S ribosomal subunit. It is not involved in the protein synthesizing functions of that subunit. In Staphylococcus epidermidis (strain ATCC 35984 / DSM 28319 / BCRC 17069 / CCUG 31568 / BM 3577 / RP62A), this protein is Large ribosomal subunit protein bL20.